Consider the following 87-residue polypeptide: Scorpine-like peptide Tco 41.46-2 (87 aa).

Residues 1-19 (MERKLALLLFLGMVTLASC) form the signal peptide. The 35-residue stretch at 53-87 (QFGCPAYEGYCNNHCQDIERKDGECHGFKCKCAKD) folds into the BetaSPN-type CS-alpha/beta domain. 3 disulfides stabilise this stretch: Cys-56/Cys-77, Cys-63/Cys-82, and Cys-67/Cys-84.

This sequence belongs to the long chain scorpion toxin family. Class 1 subfamily. Expressed by the venom gland.

Its subcellular location is the secreted. Functionally, may have antibacterial activity. Inhibits voltage-gated potassium channel. Its function is as follows. Does not induce hemolytic activity, lactate dehydrogenase (LDH) release from mast cells, mast cell degranulation, and antimicrobial effects. In vivo, injection into mice causes moderate edema formation, but induces very weak or no change in nociceptive sensibility. It also reduces mice locomotion, suggesting an increase in anxiety, but causes no alteration in rearing (standing on hind limbs). This Tityus costatus (Brazilian scorpion) protein is Scorpine-like peptide Tco 41.46-2.